Here is a 357-residue protein sequence, read N- to C-terminus: EGF-like domain-containing protein 2 (357 aa).

The signal sequence occupies residues 1-20 (MPPSLSHLFLLSTFASLALC). EGF-like domains are found at residues 21–55 (SFYC…FNCG) and 61–93 (ISAA…PTCQ). Disulfide bonds link cysteine 24-cysteine 37, cysteine 31-cysteine 43, cysteine 45-cysteine 54, cysteine 65-cysteine 75, cysteine 69-cysteine 81, and cysteine 83-cysteine 92.

In terms of tissue distribution, prismatic layer of shell (at protein level). Expressed primarily in the mantle with highest level in the mantle edge and lower level in the mantle pallium.

The protein localises to the secreted. This is EGF-like domain-containing protein 2 from Pinctada maxima (Silver-lipped pearl oyster).